A 612-amino-acid chain; its full sequence is Phosphopentomutase (612 aa).

Ala-2 is subject to N-acetylalanine. Alpha-D-glucose 1,6-bisphosphate is bound by residues Arg-63 and Ser-165. Ser-165 (phosphoserine intermediate) is an active-site residue. Residues Ser-165, Asp-322, Asp-324, and Asp-326 each coordinate Mg(2+). Ser-165 is subject to Phosphoserine. Residues Asp-326, Arg-327, Thr-400, Glu-424, and Lys-438 each contribute to the alpha-D-glucose 1,6-bisphosphate site.

Belongs to the phosphohexose mutase family. In terms of assembly, monomer. Mg(2+) serves as cofactor.

Its subcellular location is the cytoplasm. The protein resides in the cytosol. The enzyme catalyses alpha-D-ribose 1-phosphate = D-ribose 5-phosphate. It carries out the reaction 2-deoxy-alpha-D-ribose 1-phosphate = 2-deoxy-D-ribose 5-phosphate. The catalysed reaction is alpha-D-glucose 1-phosphate = alpha-D-glucose 6-phosphate. It catalyses the reaction O-phospho-L-seryl-[protein] + alpha-D-glucose 1-phosphate = alpha-D-glucose 1,6-bisphosphate + L-seryl-[protein]. The enzyme catalyses alpha-D-glucose 1,6-bisphosphate + L-seryl-[protein] = O-phospho-L-seryl-[protein] + alpha-D-glucose 6-phosphate. The phosphomutase activity is stimulated by glucose 1,6-bisphosphate. In terms of biological role, catalyzes the conversion of the nucleoside breakdown products ribose-1-phosphate and deoxyribose-1-phosphate to the corresponding 5-phosphopentoses. Catalyzes the reversible isomerization of alpha-D-glucose 1-phosphate to alpha-D-glucose 6-phosphate but with a lower catalytic efficiency. The mechanism proceeds via the intermediate compound alpha-D-glucose 1,6-bisphosphate. In vitro, also has a low glucose 1,6-bisphosphate synthase activity which is most probably not physiologically relevant. The polypeptide is Phosphopentomutase (Homo sapiens (Human)).